Consider the following 163-residue polypeptide: Small ribosomal subunit protein uS3m (163 aa).

The N-terminal 31 residues, 1–31 (MAASLIRQTKLLSVFSSAGCFRSIHSTAACL), are a transit peptide targeting the mitochondrion.

It belongs to the universal ribosomal protein uS3 family. As to quaternary structure, component of the mitochondrial ribosome small subunit (28S) which comprises a 12S rRNA and about 30 distinct proteins.

The protein resides in the mitochondrion. The sequence is that of Small ribosomal subunit protein uS3m (mrps24) from Danio rerio (Zebrafish).